Reading from the N-terminus, the 129-residue chain is Phosphoribosyl-AMP cyclohydrolase (129 aa).

Asp79 contributes to the Mg(2+) binding site. Cys80 contributes to the Zn(2+) binding site. Positions 81 and 83 each coordinate Mg(2+). Residues Cys96 and Cys103 each contribute to the Zn(2+) site.

Belongs to the PRA-CH family. In terms of assembly, homodimer. The cofactor is Mg(2+). Zn(2+) is required as a cofactor.

Its subcellular location is the cytoplasm. The enzyme catalyses 1-(5-phospho-beta-D-ribosyl)-5'-AMP + H2O = 1-(5-phospho-beta-D-ribosyl)-5-[(5-phospho-beta-D-ribosylamino)methylideneamino]imidazole-4-carboxamide. It functions in the pathway amino-acid biosynthesis; L-histidine biosynthesis; L-histidine from 5-phospho-alpha-D-ribose 1-diphosphate: step 3/9. In terms of biological role, catalyzes the hydrolysis of the adenine ring of phosphoribosyl-AMP. The polypeptide is Phosphoribosyl-AMP cyclohydrolase (Magnetococcus marinus (strain ATCC BAA-1437 / JCM 17883 / MC-1)).